The primary structure comprises 104 residues: Large ribosomal subunit protein uL24 (104 aa).

Belongs to the universal ribosomal protein uL24 family. As to quaternary structure, part of the 50S ribosomal subunit.

Its function is as follows. One of two assembly initiator proteins, it binds directly to the 5'-end of the 23S rRNA, where it nucleates assembly of the 50S subunit. One of the proteins that surrounds the polypeptide exit tunnel on the outside of the subunit. The polypeptide is Large ribosomal subunit protein uL24 (Shewanella pealeana (strain ATCC 700345 / ANG-SQ1)).